Here is a 550-residue protein sequence, read N- to C-terminus: Methionine--tRNA ligase (550 aa).

The short motif at 13–23 is the 'HIGH' region element; it reads PYANGPLHFGH. The Zn(2+) site is built by cysteine 145, cysteine 148, cysteine 158, and cysteine 161. Positions 331–335 match the 'KMSKS' region motif; the sequence is QFSKS. Lysine 334 provides a ligand contact to ATP.

The protein belongs to the class-I aminoacyl-tRNA synthetase family. MetG type 1 subfamily. In terms of assembly, monomer. The cofactor is Zn(2+).

The protein resides in the cytoplasm. It carries out the reaction tRNA(Met) + L-methionine + ATP = L-methionyl-tRNA(Met) + AMP + diphosphate. In terms of biological role, is required not only for elongation of protein synthesis but also for the initiation of all mRNA translation through initiator tRNA(fMet) aminoacylation. The protein is Methionine--tRNA ligase of Chlamydia trachomatis serovar A (strain ATCC VR-571B / DSM 19440 / HAR-13).